Here is a 319-residue protein sequence, read N- to C-terminus: Glutamyl-Q tRNA(Asp) synthetase (319 aa).

L-glutamate-binding positions include 23 to 27 (RFAPS) and E59. The short motif at 26–36 (PSPSGPLHAGS) is the 'HIGH' region element. The Zn(2+) site is built by C115, C117, Y139, and C143. Y197 and R215 together coordinate L-glutamate. The short motif at 254-258 (KLSKQ) is the 'KMSKS' region element. K257 serves as a coordination point for ATP.

It belongs to the class-I aminoacyl-tRNA synthetase family. GluQ subfamily. The cofactor is Zn(2+).

In terms of biological role, catalyzes the tRNA-independent activation of glutamate in presence of ATP and the subsequent transfer of glutamate onto a tRNA(Asp). Glutamate is transferred on the 2-amino-5-(4,5-dihydroxy-2-cyclopenten-1-yl) moiety of the queuosine in the wobble position of the QUC anticodon. This is Glutamyl-Q tRNA(Asp) synthetase from Bordetella bronchiseptica (strain ATCC BAA-588 / NCTC 13252 / RB50) (Alcaligenes bronchisepticus).